A 365-amino-acid chain; its full sequence is Inositol 4-methyltransferase (365 aa).

Position 232 (Asp232) interacts with S-adenosyl-L-methionine. His270 serves as the catalytic Proton acceptor.

The protein belongs to the class I-like SAM-binding methyltransferase superfamily. Cation-independent O-methyltransferase family. As to expression, leaves and roots. The levels found in the leaves are 25 times greater than in the roots.

It catalyses the reaction myo-inositol + S-adenosyl-L-methionine = 1D-4-O-methyl-myo-inositol + S-adenosyl-L-homocysteine + H(+). It functions in the pathway polyol metabolism; myo-inositol metabolism. Catalyzes the methylation of myo-inositol into ononitol (1D-4-O-methyl myo-inositol), the first step in the biosynthesis of the cyclic sugar pinitol which has osmoprotective properties. The sequence is that of Inositol 4-methyltransferase (IMT1) from Mesembryanthemum crystallinum (Common ice plant).